The following is a 397-amino-acid chain: Nuclear egress protein 2 (397 aa).

Residues M1–W358 lie on the Perinuclear space side of the membrane. Disordered stretches follow at residues R205–P245 and A291–E332. Position 216 is a phosphoserine (S216). 2 stretches are compositionally biased toward low complexity: residues P224 to G239 and A291 to A301. The segment covering S310–P322 has biased composition (basic residues). The helical transmembrane segment at L359–W381 threads the bilayer. Residues R382–D397 lie on the Nuclear side of the membrane.

The protein belongs to the herpesviridae NEC2 protein family. As to quaternary structure, forms a heterohexameric complex with NEC1. Interacts with host UBA7 and RNF170; this interaction promotes UBA7 proteasomal degradation. Phosphorylated. Phosphorylation by viral kinase UL97 at Ser-216 plays an important role for correct viral nuclear egress complex (NEC) localization.

The protein resides in the host nucleus inner membrane. Its function is as follows. Plays an essential role in virion nuclear egress, the first step of virion release from infected cell. Within the host nucleus, NEC1 interacts with the newly formed capsid through the vertexes and directs it to the inner nuclear membrane by associating with NEC2. Induces the budding of the capsid at the inner nuclear membrane as well as its envelopment into the perinuclear space. There, the NEC1/NEC2 complex promotes the fusion of the enveloped capsid with the outer nuclear membrane and the subsequent release of the viral capsid into the cytoplasm where it will reach the secondary budding sites in the host Golgi or trans-Golgi network. Inhibits host ISGylation and subsequent innate antiviral response by targeting host UBA7 for proteasomal degradation. The sequence is that of Nuclear egress protein 2 from Human cytomegalovirus (strain AD169) (HHV-5).